Reading from the N-terminus, the 240-residue chain is Membrane-spanning 4-domains subfamily A member 7 (240 aa).

The Cytoplasmic segment spans residues 1–47 (MLLQSQTMGVSHSFTPKGITIPQREKPGHMYQNEDYLQNGLPTETTV). A helical membrane pass occupies residues 48–68 (LGTVQILCCLLISSLGAILVF). At 69 to 83 (APYPSHFNPAISTTL) the chain is on the extracellular side. The helical transmembrane segment at 84–104 (MSGYPFLGALCFGITGSLSII) threads the bilayer. The Cytoplasmic portion of the chain corresponds to 105 to 121 (SGKQSTKPFDLSSLTSN). The chain crosses the membrane as a helical span at residues 122–142 (AVSSVTAGAGLFLLADSMVAL). Over 143–178 (RTASQHCGSEMDYLSSLPYSEYYYPIYEIKDCLLTS) the chain is Extracellular. The chain crosses the membrane as a helical span at residues 179–199 (VSLTGVLVVMLIFTVLELLLA). The Cytoplasmic portion of the chain corresponds to 200–240 (AYSSVFWWKQLYSNNPGSSFSSTQSQDHIQQVKKSSSRSWI). Positions 218-240 (SFSSTQSQDHIQQVKKSSSRSWI) are disordered.

This sequence belongs to the MS4A family. In terms of tissue distribution, ubiquitous expression in normal tissues. Expression is more elevated in adult liver, lung, spleen, and heart than in their fetal counterparts, and is higher in normal tissues than in the cancerous tissue or cell lines. Low levels of expression were detected in the promonocytic stage, whereas high levels of expression were detected in mature monocytes.

It is found in the membrane. In terms of biological role, may be involved in signal transduction as a component of a multimeric receptor complex. The sequence is that of Membrane-spanning 4-domains subfamily A member 7 (MS4A7) from Homo sapiens (Human).